The following is a 96-amino-acid chain: Putative septation protein SpoVG (96 aa).

Belongs to the SpoVG family.

Could be involved in septation. The protein is Putative septation protein SpoVG of Oceanobacillus iheyensis (strain DSM 14371 / CIP 107618 / JCM 11309 / KCTC 3954 / HTE831).